Reading from the N-terminus, the 385-residue chain is S-adenosylmethionine synthase (385 aa).

ATP is bound at residue histidine 15. Residue aspartate 17 participates in Mg(2+) binding. Glutamate 43 lines the K(+) pocket. The L-methionine site is built by glutamate 56 and glutamine 99. Positions 99–109 (QSVDIAQGVDR) are flexible loop. ATP is bound by residues 164–166 (DAK), 230–231 (RF), aspartate 239, 245–246 (RK), and lysine 266. Aspartate 239 lines the L-methionine pocket. Lysine 270 is a binding site for L-methionine.

It belongs to the AdoMet synthase family. Homotetramer; dimer of dimers. Mg(2+) is required as a cofactor. It depends on K(+) as a cofactor.

Its subcellular location is the cytoplasm. The enzyme catalyses L-methionine + ATP + H2O = S-adenosyl-L-methionine + phosphate + diphosphate. The protein operates within amino-acid biosynthesis; S-adenosyl-L-methionine biosynthesis; S-adenosyl-L-methionine from L-methionine: step 1/1. Catalyzes the formation of S-adenosylmethionine (AdoMet) from methionine and ATP. The overall synthetic reaction is composed of two sequential steps, AdoMet formation and the subsequent tripolyphosphate hydrolysis which occurs prior to release of AdoMet from the enzyme. The polypeptide is S-adenosylmethionine synthase (Alkalilimnicola ehrlichii (strain ATCC BAA-1101 / DSM 17681 / MLHE-1)).